The following is a 276-amino-acid chain: Monoglyceride lipase homolog (276 aa).

This sequence belongs to the orthopoxvirus OPG043 family.

In Cynomys gunnisoni (Gunnison's prairie dog), this protein is Monoglyceride lipase homolog (OPG043).